Consider the following 497-residue polypeptide: Zinc finger CCCH domain-containing protein 22 (497 aa).

Residues 136-163 (SESMMICKFFMQQRCRFGSSCRSSHGLD) form a C3H1-type zinc finger. Residues 236 to 281 (AQMTDDDGEEEEEEDEQQSASDSEDSVSSDYDEGSPQGIGFLESTN) form a disordered region. A compositionally biased stretch (acidic residues) spans 239–268 (TDDDGEEEEEEDEQQSASDSEDSVSSDYDE). Residues 300 to 346 (TRGIASKMMASMGYREGMGLGVSGQGILNPILVKVLPAKRSLDYALE) form the G-patch domain. The disordered stretch occupies residues 352 to 387 (ECKSEKQKKKRSRGGKRKRGKKFAEAAKAAKQEEES). Positions 357–372 (KQKKKRSRGGKRKRGK) are enriched in basic residues. Positions 373–387 (KFAEAAKAAKQEEES) are enriched in basic and acidic residues.

This is Zinc finger CCCH domain-containing protein 22 from Arabidopsis thaliana (Mouse-ear cress).